Reading from the N-terminus, the 315-residue chain is Lipoyl synthase (315 aa).

Positions 1–33 (MADMPPVLRHPEKAHRPDQPQPKKPDWIRVKAP) are disordered. Residues 9-29 (RHPEKAHRPDQPQPKKPDWIR) show a composition bias toward basic and acidic residues. Residues Cys-54, Cys-59, Cys-65, Cys-80, Cys-84, Cys-87, and Ser-294 each contribute to the [4Fe-4S] cluster site. The Radical SAM core domain maps to 66 to 283 (WSQGHATMMI…EKAAYGKGFL (218 aa)).

It belongs to the radical SAM superfamily. Lipoyl synthase family. [4Fe-4S] cluster is required as a cofactor.

It is found in the cytoplasm. It carries out the reaction [[Fe-S] cluster scaffold protein carrying a second [4Fe-4S](2+) cluster] + N(6)-octanoyl-L-lysyl-[protein] + 2 oxidized [2Fe-2S]-[ferredoxin] + 2 S-adenosyl-L-methionine + 4 H(+) = [[Fe-S] cluster scaffold protein] + N(6)-[(R)-dihydrolipoyl]-L-lysyl-[protein] + 4 Fe(3+) + 2 hydrogen sulfide + 2 5'-deoxyadenosine + 2 L-methionine + 2 reduced [2Fe-2S]-[ferredoxin]. Its pathway is protein modification; protein lipoylation via endogenous pathway; protein N(6)-(lipoyl)lysine from octanoyl-[acyl-carrier-protein]: step 2/2. In terms of biological role, catalyzes the radical-mediated insertion of two sulfur atoms into the C-6 and C-8 positions of the octanoyl moiety bound to the lipoyl domains of lipoate-dependent enzymes, thereby converting the octanoylated domains into lipoylated derivatives. The chain is Lipoyl synthase from Paracoccus denitrificans (strain Pd 1222).